The following is a 117-amino-acid chain: Ribosome-binding factor A (117 aa).

Belongs to the RbfA family. In terms of assembly, monomer. Binds 30S ribosomal subunits, but not 50S ribosomal subunits or 70S ribosomes.

The protein localises to the cytoplasm. One of several proteins that assist in the late maturation steps of the functional core of the 30S ribosomal subunit. Associates with free 30S ribosomal subunits (but not with 30S subunits that are part of 70S ribosomes or polysomes). Required for efficient processing of 16S rRNA. May interact with the 5'-terminal helix region of 16S rRNA. The chain is Ribosome-binding factor A from Nitrosomonas eutropha (strain DSM 101675 / C91 / Nm57).